The primary structure comprises 704 residues: Meprin A subunit beta (704 aa).

The N-terminal stretch at 1 to 20 (MDARHQPWFLVFATFLLVSG) is a signal peptide. Positions 21–64 (LPAPEKFVKDIDGGIDQDIFDINQGLGLDLFEGDIKLEANGKNS) are excised as a propeptide. Over 21-654 (LPAPEKFVKD…RCEKRGSTRD (634 aa)) the chain is Extracellular. The region spanning 63-257 (NSIIGDHKRW…LKLNQLYNCT (195 aa)) is the Peptidase M12A domain. 3 disulfides stabilise this stretch: Cys-104/Cys-256, Cys-125/Cys-145, and Cys-266/Cys-428. His-153 is a Zn(2+) binding site. Residue Glu-154 is part of the active site. His-157 and His-163 together coordinate Zn(2+). Residues Asn-193, Asn-219, Asn-255, Asn-316, Asn-422, Asn-437, Asn-529, Asn-548, and Asn-593 are each glycosylated (N-linked (GlcNAc...) asparagine). The MAM domain occupies 261 to 430 (SFMDSCDFEL…INLSETRCPH (170 aa)). The MATH domain occupies 431-586 (HIWHIQNFTQ…GDDIYILLTV (156 aa)). The EGF-like domain occupies 607 to 647 (VHNACSEVVCQNGGICVVQDGRAECKCPAGEDWWYMGKRCE). 3 disulfides stabilise this stretch: Cys-611–Cys-622, Cys-616–Cys-631, and Cys-633–Cys-646. Residues 655 to 678 (TVIIAVSSTVTVFAVMLIITLVSV) form a helical membrane-spanning segment. Residues 679–704 (YCTRRKYRKKARANTAAMTLENQHAF) are Cytoplasmic-facing. Thr-697 is subject to Phosphothreonine.

As to quaternary structure, homotetramer consisting of disulfide-linked beta subunits, or heterotetramer of two alpha and two beta subunits formed by non-covalent association of two disulfide-linked heterodimers. Interacts with MBL2 through its carbohydrate moiety. This interaction may inhibit its catalytic activity. Interacts with TSPAN8. Zn(2+) serves as cofactor. Proteolytically activated by trypsin in the intestinal lumen and kallikrein-related peptidases in other tissues. In terms of processing, N-glycosylated; contains high mannose and/or complex biantennary structures. Post-translationally, phosphorylated by PKC at multiple sites of its cytoplasmic part. Phosphorylation dcreases activity at the cell surface, leading to diminished substrate cleavage. Isoform 1 is expressed in kidney, intestinal brush borders, and salivary ducts. Isoform 2 has been found in carcinoma cells.

It is found in the cell membrane. It localises to the secreted. It carries out the reaction Hydrolysis of proteins, including azocasein, and peptides. Hydrolysis of 5-His-|-Leu-6, 6-Leu-|-Cys-7, 14-Ala-|-Leu-15 and 19-Cys-|-Gly-20 bonds in insulin B chain.. With respect to regulation, strongly inhibited by fetuin-A/AHSG. Inhibited by cysteine and by the metal ion chelators EDTA and 1,10-phenanthroline. Not inhibited by 3,4-dichloroisocourmarin, soybean trypsin inhibitor, or the cysteine proteinase inhibitors iodoacetic acid and E-64. Functionally, membrane metallopeptidase that sheds many membrane-bound proteins. Exhibits a strong preference for acidic amino acids at the P1' position. Known substrates include: FGF19, VGFA, IL1B, IL18, procollagen I and III, E-cadherin, KLK7, gastrin, ADAM10, tenascin-C. The presence of several pro-inflammatory cytokine among substrates implicate MEP1B in inflammation. It is also involved in tissue remodeling due to its capability to degrade extracellular matrix components. The sequence is that of Meprin A subunit beta (Mep1b) from Mus musculus (Mouse).